The sequence spans 418 residues: Gamma-glutamyl phosphate reductase (418 aa).

The protein belongs to the gamma-glutamyl phosphate reductase family.

Its subcellular location is the cytoplasm. It catalyses the reaction L-glutamate 5-semialdehyde + phosphate + NADP(+) = L-glutamyl 5-phosphate + NADPH + H(+). It functions in the pathway amino-acid biosynthesis; L-proline biosynthesis; L-glutamate 5-semialdehyde from L-glutamate: step 2/2. Its function is as follows. Catalyzes the NADPH-dependent reduction of L-glutamate 5-phosphate into L-glutamate 5-semialdehyde and phosphate. The product spontaneously undergoes cyclization to form 1-pyrroline-5-carboxylate. This chain is Gamma-glutamyl phosphate reductase, found in Clostridium kluyveri (strain NBRC 12016).